The following is a 465-amino-acid chain: Protein hedgehog (465 aa).

The N-palmitoyl cysteine moiety is linked to residue Cys79. Positions 143, 144, 149, 179, 180, 183, and 185 each coordinate Ca(2+). The Cholesterol glycine ester moiety is linked to residue Gly251.

It belongs to the hedgehog family. In terms of assembly, interacts with shf. The C-terminal part of the hedgehog protein precursor displays an autoproteolysis activity that results in the cleavage of the full-length protein into two parts (N-product and C-product). In addition, the C-terminal part displays a cholesterol transferase activity that results by the covalent attachment of a cholesterol moiety to the C-terminal of the newly generated N-product. The N-product is the active species in both local and long-range signaling, whereas the C-product has no signaling activity. Post-translationally, cholesterylation is required for N-product targeting to lipid rafts and multimerization. In terms of processing, N-palmitoylation by Rasp of the hedgehog N-product, within the secretory pathway, is required for the embryonic and larval patterning activities of the hedgehog signal.

Its subcellular location is the nucleus. It is found in the cytoplasm. The protein resides in the cell membrane. It catalyses the reaction glycyl-L-cysteinyl-[protein] + cholesterol + H(+) = [protein]-C-terminal glycyl cholesterol ester + N-terminal L-cysteinyl-[protein]. Its function is as follows. The C-terminal part of the hedgehog protein precursor displays an autoproteolysis activity that results in the cleavage of the full-length protein into two parts (N-product and C-product). In addition, the C-terminal part displays a cholesterol transferase activity that results by the covalent attachment of a cholesterol moiety to the C-terminal of the newly generated N-product. Once cleaved, the C-product has no signaling activity and diffuses from the cell. The dually lipidated hedgehog protein N-product is a morphogen which is essential for a variety of patterning events during development. Establishes the anterior-posterior axis of the embryonic segments and patterns the larval imaginal disks. Binds to the patched (ptc) receptor, which functions in association with smoothened (smo), to activate the transcription of target genes wingless (wg), decapentaplegic (dpp) and ptc. In the absence of hh, ptc represses the constitutive signaling activity of smo through fused (fu). Essential component of a signaling pathway which regulates the Duox-dependent gut immune response to bacterial uracil; required to activate Cad99C-dependent endosome formation, norpA-dependent Ca2+ mobilization and p38 MAPK, which are essential steps in the Duox-dependent production of reactive oxygen species (ROS) in response to intestinal bacterial infection. During photoreceptor differentiation, it up-regulates transcription of Ubr3, which in turn promotes the hh-signaling pathway by mediating the ubiquitination and degradation of cos. The sequence is that of Protein hedgehog from Drosophila erecta (Fruit fly).